Here is a 361-residue protein sequence, read N- to C-terminus: UDP-3-O-acylglucosamine N-acyltransferase (361 aa).

Catalysis depends on His253, which acts as the Proton acceptor.

Belongs to the transferase hexapeptide repeat family. LpxD subfamily. As to quaternary structure, homotrimer.

The catalysed reaction is a UDP-3-O-[(3R)-3-hydroxyacyl]-alpha-D-glucosamine + a (3R)-hydroxyacyl-[ACP] = a UDP-2-N,3-O-bis[(3R)-3-hydroxyacyl]-alpha-D-glucosamine + holo-[ACP] + H(+). It participates in bacterial outer membrane biogenesis; LPS lipid A biosynthesis. Catalyzes the N-acylation of UDP-3-O-acylglucosamine using 3-hydroxyacyl-ACP as the acyl donor. Is involved in the biosynthesis of lipid A, a phosphorylated glycolipid that anchors the lipopolysaccharide to the outer membrane of the cell. The polypeptide is UDP-3-O-acylglucosamine N-acyltransferase (Burkholderia pseudomallei (strain 668)).